The primary structure comprises 510 residues: Polyamine aminopropyltransferase 2 (510 aa).

6 consecutive transmembrane segments (helical) span residues 6–26 (ALLV…ELIA), 38–58 (ILQF…GSWV), 74–94 (LELL…LLFA), 102–122 (LVLY…IPLV), 140–160 (VLTF…LVLA), and 165–185 (LVRT…WTLW). In terms of domain architecture, PABS spans 205-449 (AGMVGAALLA…GEWGFILAAP (245 aa)). Residues 207–456 (MVGAALLAGF…AAPGRADFRP (250 aa)) form a spermidine synthase region. Gln244 is an S-methyl-5'-thioadenosine binding site. Spermidine contacts are provided by His274 and Asp298. Residues Asp318 and 352-353 (DA) contribute to the S-methyl-5'-thioadenosine site. Residue Asp370 is the Proton acceptor of the active site.

It belongs to the spermidine/spermine synthase family. As to quaternary structure, homodimer or homotetramer.

The protein resides in the cell membrane. The enzyme catalyses S-adenosyl 3-(methylsulfanyl)propylamine + putrescine = S-methyl-5'-thioadenosine + spermidine + H(+). The protein operates within amine and polyamine biosynthesis; spermidine biosynthesis; spermidine from putrescine: step 1/1. In terms of biological role, catalyzes the irreversible transfer of a propylamine group from the amino donor S-adenosylmethioninamine (decarboxy-AdoMet) to putrescine (1,4-diaminobutane) to yield spermidine. The protein is Polyamine aminopropyltransferase 2 of Ralstonia nicotianae (strain ATCC BAA-1114 / GMI1000) (Ralstonia solanacearum).